Reading from the N-terminus, the 677-residue chain is WD repeat-containing protein 48 (677 aa).

At tyrosine 28 the chain carries Phosphotyrosine. WD repeat units lie at residues 28 to 67 (YNRN…QDPY), 73 to 112 (HHTD…CMST), 115 to 154 (THKD…ALTA), 166 to 205 (GNKD…KLMK), 208 to 247 (GHTD…CIAT), 250 to 289 (VHDE…IRVL), 292 to 334 (EEKA…NFRA), and 358 to 397 (KGGA…KVED). Lysine 214 carries the N6-acetyllysine modification. Lysine 578 is subject to N6-acetyllysine. Positions 607–628 (LDNESQTTSSSNNEKPGEQEKE) are disordered. The segment covering 609–620 (NESQTTSSSNNE) has biased composition (low complexity). Residue threonine 613 is modified to Phosphothreonine.

The protein belongs to the WD repeat WDR48 family. As to quaternary structure, interacts with USP46. Interacts with USP1. Interacts with USP12. Component of the USP12-WDR20-WDR48 deubiquitinating complex. Component of the USP12-DMWD-WDR48 deubiquitinating complex. Interacts with PHLPP1. Interacts with RAD51AP1; the interaction is direct and promotes formation of a trimeric complex with RAD51 via RAD51AP1. Interacts with ATAD5; the interaction regulates USP1-mediated PCNA deubiquitination. Interacts with RAD51; the interaction is enhanced under replication stress. Interacts with ITCH; the interaction is more efficient when both USP12 and WDR48/UAF1 are involved and may facilitate recruitment of the USP12 deubiquitinating complex to Notch. (Microbial infection) Interacts with papillomavirus HPV11 E1 protein. In terms of assembly, (Microbial infection) Interacts with Saimiriine herpesvirus TIP protein. As to quaternary structure, (Microbial infection) Interacts with human cytomegalovirus protein UL138. (Microbial infection) Interacts with Epstein-Barr virus protein EBNA3. Ubiquitous.

Its subcellular location is the nucleus. The protein localises to the cytoplasm. It localises to the lysosome. The protein resides in the late endosome. Its function is as follows. Regulator of deubiquitinating complexes, which acts as a strong activator of USP1, USP12 and USP46. Enhances the USP1-mediated deubiquitination of FANCD2; USP1 being almost inactive by itself. Activates deubiquitination by increasing the catalytic turnover without increasing the affinity of deubiquitinating enzymes for the substrate. Also activates deubiquitinating activity of complexes containing USP12. In complex with USP12, acts as a potential tumor suppressor by positively regulating PHLPP1 stability. Docks at the distal end of the USP12 fingers domain and induces a cascade of structural changes leading to the activation of the enzyme. Together with RAD51AP1, promotes DNA repair by stimulating RAD51-mediated homologous recombination. Binds single-stranded DNA (ssDNA) and double-stranded DNA (dsDNA). DNA-binding is required both for USP1-mediated deubiquitination of FANCD2 and stimulation of RAD51-mediated homologous recombination: both WDR48/UAF1 and RAD51AP1 have coordinated role in DNA-binding during these processes. Together with ATAD5 and by regulating USP1 activity, has a role in PCNA-mediated translesion synthesis (TLS) by deubiquitinating monoubiquitinated PCNA. Together with ATAD5, has a role in recruiting RAD51 to stalled forks during replication stress. (Microbial infection) In case of infection by Herpesvirus saimiri, may play a role in vesicular transport or membrane fusion events necessary for transport to lysosomes. Induces lysosomal vesicle formation via interaction with Herpesvirus saimiri tyrosine kinase-interacting protein (TIP). Subsequently, TIP recruits tyrosine-protein kinase LCK, resulting in down-regulation of T-cell antigen receptor TCR. May play a role in generation of enlarged endosomal vesicles via interaction with TIP. In case of infection by papillomavirus HPV11, promotes the maintenance of the viral genome via its interaction with HPV11 helicase E1. This is WD repeat-containing protein 48 from Homo sapiens (Human).